The following is a 193-amino-acid chain: MRLCDRDIIKWLDEGKLVIAPRPPIERINGATADVRLGNQFRVFCGHTAAYIDLSGPKDEVSAALDRVMSDEIILPDDEVFFLHPGELALAVTLESVTLPDDLVGWLDGRSSLARLGLMVHVTAHRIDPGWHGQIVLEFYNSGKLPLALRPGMVIGALSFEPLSGSADRPYNRRQDAKYKNQQGAVSSRIDED.

DCTP contacts are provided by residues Arg-110–Arg-115, Asp-128, Val-136–Glu-138, Tyr-171, Lys-178, and Gln-182. Residue Glu-138 is the Proton donor/acceptor of the active site. Positions Asp-168–Asp-193 are disordered. Positions Pro-170–Tyr-179 are enriched in basic and acidic residues.

Belongs to the dCTP deaminase family. Homotrimer.

It carries out the reaction dCTP + H2O + H(+) = dUTP + NH4(+). It functions in the pathway pyrimidine metabolism; dUMP biosynthesis; dUMP from dCTP (dUTP route): step 1/2. Catalyzes the deamination of dCTP to dUTP. This Photorhabdus laumondii subsp. laumondii (strain DSM 15139 / CIP 105565 / TT01) (Photorhabdus luminescens subsp. laumondii) protein is dCTP deaminase.